The primary structure comprises 566 residues: ATP-binding protein SyrD (566 aa).

The region spanning 22-301 (HPWLTFFTLL…LVSAMPMLAQ (280 aa)) is the ABC transmembrane type-1 domain. The next 6 membrane-spanning stretches (helical) occupy residues 24 to 44 (WLTF…IAVV), 61 to 81 (LFWF…ASLF), 132 to 152 (LLIM…IAYL), 158 to 178 (VVFA…LLFF), 250 to 270 (QLTL…FAVI), and 279 to 299 (VLAV…MPML). The ABC transporter domain occupies 343-566 (IQLKNVHMNY…VKCAVEGKRA (224 aa)). 380–387 (GGNGCGKS) is a binding site for ATP.

Belongs to the ABC transporter superfamily. Dimer.

Its subcellular location is the cell inner membrane. In terms of biological role, ATP-driven efflux pump necessary for the secretion of syringomycin. May specifically bind syringomycin and translocate it to the periplasmic space. SyrD is also required for full expression of the syrB gene. The polypeptide is ATP-binding protein SyrD (syrD) (Pseudomonas syringae pv. syringae).